The following is a 1492-amino-acid chain: Collagen alpha-1(II) chain (1492 aa).

Residues 1 to 26 form the signal peptide; the sequence is MFSFVDSRTLVLFAATQVILLAVVRC. A propeptide spans 27 to 186 (N-terminal propeptide); that stretch reads QDEEDVLATG…PPGLGGNFAA (160 aa). Residues 36 to 94 form the VWFC domain; that stretch reads GSCVQHGQRYSDKDVWKPEPCQICVCDTGNVLCDEIICEDPKDCPNAEIPFGECCPICP. The tract at residues 98–1255 is disordered; that stretch reads SSTSSGQGVL…ADQASSSVPQ (1158 aa). Composition is skewed to basic and acidic residues over residues 110 to 121 and 138 to 159; these read QKGEPGDIKDVV and PRGDRGDKGEKGAPGPRGRDGE. Over residues 163-178 the composition is skewed to pro residues; the sequence is PGNPGPVGPPGPPGPP. The segment covering 197–208 has biased composition (low complexity); sequence GGAQMGVMQGPM. Positions 206–1219 are triple-helical region; it reads GPMGPMGPRG…PGPPGPPGPP (1014 aa). Residues 213–222 show a composition bias toward pro residues; the sequence is PRGPPGPTGA. The span at 223 to 234 shows a compositional bias: low complexity; the sequence is PGPQGFQGNPGE. The span at 236-245 shows a compositional bias: gly residues; it reads GEPGAGGPMG. A compositionally biased stretch (basic and acidic residues) spans 256-270; sequence PGDDGEAGKPGKSGE. Positions 311 to 320 are enriched in gly residues; the sequence is GAKGEGGATG. Composition is skewed to low complexity over residues 321–333, 340–355, 366–376, and 396–436; these read EAGSPGPMGPRGL, PGASGAAGARGNDGLP, PAGAPGFPGAP, and PRGE…AGAP. A compositionally biased stretch (pro residues) spans 438–447; that stretch reads FPGPRGPPGP. 2 stretches are compositionally biased toward low complexity: residues 480–490 and 501–517; these read SAGPQGAPGPA and EPGAAGPLGPPGERGAP. The segment covering 539-548 has biased composition (gly residues); it reads GVPGLGGPKG. Composition is skewed to low complexity over residues 627-636 and 645-655; these read LLGAPGLRGL and AQGPNGPAGPA. 2 positions are modified to 4-hydroxyproline: Pro-664 and Pro-673. A 3-hydroxyproline modification is found at Pro-675. 4-hydroxyproline is present on residues Pro-676 and Pro-679. The segment covering 711–741 has biased composition (low complexity); sequence ERGSSGPQGLQGPRGLPGTPGTDGPKGATGP. A compositionally biased stretch (basic and acidic residues) spans 769-780; that stretch reads KGDRGDTGEKGP. Low complexity-rich tracts occupy residues 838-850 and 894-910; these read AGFAGPPGADGQA and AQGPPGATGFPGAAGRV. Pro-912 bears the 3-hydroxyproline mark. 3 positions are modified to 4-hydroxyproline: Pro-913, Pro-919, and Pro-925. The segment covering 919-930 has biased composition (low complexity); that stretch reads PGPSGAPGSAGK. The segment covering 1010–1019 has biased composition (gly residues); the sequence is GKQGGPGSAG. Residues 1105-1114 are compositionally biased toward low complexity; sequence SGPAGARGLP. Positions 1120–1134 are enriched in basic and acidic residues; the sequence is RGDKGEAGEAGERGQ. 2 stretches are compositionally biased toward low complexity: residues 1140–1159 and 1176–1186; these read FTGLQGLPGPPGTAGDQGAS and PSGKDGSNGLP. Pro-1149 bears the 3-hydroxyproline mark. The residue at position 1186 (Pro-1186) is a 4-hydroxyproline. 3-hydroxyproline is present on Pro-1191. Pro-1192 bears the 4-hydroxyproline mark. Positions 1204 to 1221 are enriched in pro residues; the sequence is AGPPGQPGPPGPPGPPGP. At Pro-1206 the chain carries 3-hydroxyproline. 4-hydroxyproline is present on residues Pro-1207 and Pro-1210. 3-hydroxyproline is present on Pro-1212. A 4-hydroxyproline mark is found at Pro-1213 and Pro-1216. Pro-1218 is modified (3-hydroxyproline). 4-hydroxyproline is present on Pro-1219. Residues 1220 to 1246 are nonhelical region (C-terminal); it reads GPGIDMSAFAGLSQPEKGPDPMRYMRA. The span at 1236–1245 shows a compositional bias: basic and acidic residues; sequence KGPDPMRYMR. The propeptide at 1247–1492 is C-terminal propeptide; it reads DQASSSVPQR…GVDIGPVCFL (246 aa). Residues 1258 to 1492 form the Fibrillar collagen NC1 domain; that stretch reads VDVEATLKSL…GVDIGPVCFL (235 aa). 3 disulfide bridges follow: Cys-1288-Cys-1320, Cys-1328-Cys-1490, and Cys-1398-Cys-1443. The Ca(2+) site is built by Asp-1306, Asn-1308, Gln-1309, Cys-1311, and Asp-1314. The N-linked (GlcNAc...) asparagine glycan is linked to Asn-1393.

This sequence belongs to the fibrillar collagen family. As to quaternary structure, homotrimers of alpha 1(II) chains. Contains mostly 4-hydroxyproline. Prolines at the third position of the tripeptide repeating unit (G-X-P) are 4-hydroxylated in some or all of the chains. Post-translationally, contains 3-hydroxyproline at a few sites. This modification occurs on the first proline residue in the sequence motif Gly-Pro-Hyp, where Hyp is 4-hydroxyproline. In terms of processing, lysine residues at the third position of the tripeptide repeating unit (G-X-Y) are 5-hydroxylated in some or all of the chains. O-glycosylated on hydroxylated lysine residues. The O-linked glycan consists of a Glc-Gal disaccharide.

The protein resides in the secreted. Its subcellular location is the extracellular space. The protein localises to the extracellular matrix. In terms of biological role, type II collagen is specific for cartilaginous tissues. It is essential for the normal embryonic development of the skeleton, for linear growth and for the ability of cartilage to resist compressive forces. The sequence is that of Collagen alpha-1(II) chain from Xenopus tropicalis (Western clawed frog).